Consider the following 143-residue polypeptide: UPF0102 protein Acid345_3985 (143 aa).

This sequence belongs to the UPF0102 family.

The sequence is that of UPF0102 protein Acid345_3985 from Koribacter versatilis (strain Ellin345).